Reading from the N-terminus, the 271-residue chain is Putative hydro-lyase OCAR_7359/OCA5_c07590 (271 aa).

The protein belongs to the D-glutamate cyclase family.

The chain is Putative hydro-lyase OCAR_7359/OCA5_c07590 from Afipia carboxidovorans (strain ATCC 49405 / DSM 1227 / KCTC 32145 / OM5) (Oligotropha carboxidovorans).